We begin with the raw amino-acid sequence, 440 residues long: GTPase Obg (440 aa).

Residues 5–163 (STFVDQTKIE…RTLRLELKVL (159 aa)) enclose the Obg domain. In terms of domain architecture, OBG-type G spans 164–338 (ADVGLVGFPS…LMSRAADLVS (175 aa)). GTP contacts are provided by residues 170–177 (GFPSVGKS), 195–199 (FTTLK), 217–220 (DLPG), 288–291 (SQMD), and 319–321 (SSV). Positions 177 and 197 each coordinate Mg(2+). The 79-residue stretch at 362 to 440 (YHRPEKMEFT…IGDFSFEFVQ (79 aa)) folds into the OCT domain.

Belongs to the TRAFAC class OBG-HflX-like GTPase superfamily. OBG GTPase family. As to quaternary structure, monomer. Mg(2+) serves as cofactor.

Its subcellular location is the cytoplasm. An essential GTPase which binds GTP, GDP and possibly (p)ppGpp with moderate affinity, with high nucleotide exchange rates and a fairly low GTP hydrolysis rate. Plays a role in control of the cell cycle, stress response, ribosome biogenesis and in those bacteria that undergo differentiation, in morphogenesis control. The sequence is that of GTPase Obg from Lactobacillus delbrueckii subsp. bulgaricus (strain ATCC 11842 / DSM 20081 / BCRC 10696 / JCM 1002 / NBRC 13953 / NCIMB 11778 / NCTC 12712 / WDCM 00102 / Lb 14).